Reading from the N-terminus, the 203-residue chain is Secreted phosphoprotein 24 (203 aa).

The first 23 residues, 1–23 (MEKMVMKMLVIFVFGMNHWTCTG), serve as a signal peptide directing secretion. Intrachain disulfides connect cysteine 86/cysteine 97 and cysteine 110/cysteine 128. Serine 90 is subject to Phosphoserine. 4 positions are modified to phosphoserine: serine 138, serine 139, serine 166, and serine 175. Residues 155–174 (NSHLLGLTPDRSRGEPLYER) are disordered. Residues 164-174 (DRSRGEPLYER) show a composition bias toward basic and acidic residues.

The protein belongs to the SPP2 family. In terms of processing, multiply phosphorylated at serine residues. Post-translationally, phosphorylation sites are present in the extracellular medium.

It is found in the secreted. In terms of biological role, could coordinate an aspect of bone turnover. The sequence is that of Secreted phosphoprotein 24 (SPP2) from Ovis aries (Sheep).